We begin with the raw amino-acid sequence, 133 residues long: Large ribosomal subunit protein bL17 (133 aa).

The protein belongs to the bacterial ribosomal protein bL17 family. In terms of assembly, part of the 50S ribosomal subunit. Contacts protein L32.

This chain is Large ribosomal subunit protein bL17, found in Polaromonas naphthalenivorans (strain CJ2).